Here is a 749-residue protein sequence, read N- to C-terminus: Patatin-like phospholipase domain-containing protein An01g04180 (749 aa).

Residues 1–21 (MNGAEKSAAGDTYDPSTIPDY) form a disordered region. Residues 87-107 (WPFLFTVFGWITALAFAYTLT) form a helical membrane-spanning segment. Residues 277-468 (LCLSGGATFA…RTDIPIKALN (192 aa)) form the PNPLA domain. The short motif at 308–312 (GTSGG) is the GXSXG element. Serine 310 functions as the Nucleophile in the catalytic mechanism. Catalysis depends on aspartate 455, which acts as the Proton acceptor. The segment at 619–726 (AGGRPISPAP…STGSSIFEEV (108 aa)) is disordered. Residues 649-664 (PLNERLDHNLPERRGD) are compositionally biased toward basic and acidic residues. Over residues 685–707 (SLSENSSNESAARPSSSSSSSRL) the composition is skewed to low complexity.

This sequence belongs to the PLPL family.

The protein localises to the membrane. Its function is as follows. Probable lipid hydrolase. The chain is Patatin-like phospholipase domain-containing protein An01g04180 from Aspergillus niger (strain ATCC MYA-4892 / CBS 513.88 / FGSC A1513).